A 193-amino-acid polypeptide reads, in one-letter code: Annexin-2 receptor (193 aa).

Over residues 78 to 87 the composition is skewed to polar residues; it reads QSTLEPSTAK. The disordered stretch occupies residues 78 to 111; sequence QSTLEPSTAKPTEFSWPGTQKQQEAPVEEVGQAE.

In terms of tissue distribution, widely expressed. Highly expressed in lymphocytes. Expressed in both resting CD4(+) and CD8(+) T-cells.

Its function is as follows. May act as a receptor for annexin II on marrow stromal cells to induce osteoclast formation. In Homo sapiens (Human), this protein is Annexin-2 receptor (ANXA2R).